Consider the following 308-residue polypeptide: 1-acyl-sn-glycerol-3-phosphate acyltransferase (308 aa).

Helical transmembrane passes span 65–85 (FLSM…LLPW), 124–144 (AIYI…WLIP), and 148–168 (VTIA…YVLA). Residues 130–135 (HASLVD) carry the HXXXXD motif motif.

Belongs to the 1-acyl-sn-glycerol-3-phosphate acyltransferase family.

It is found in the membrane. It carries out the reaction a 1-acyl-sn-glycero-3-phosphate + an acyl-CoA = a 1,2-diacyl-sn-glycero-3-phosphate + CoA. In terms of biological role, converts lysophosphatidic acid (LPA) into phosphatidic acid by incorporating acyl moiety at the 2 position. This enzyme shows a preference for medium-chain-length fatty acyl-coenzyme a substrates. This is 1-acyl-sn-glycerol-3-phosphate acyltransferase from Cocos nucifera (Coconut palm).